A 460-amino-acid chain; its full sequence is Probable Xaa-Pro aminopeptidase VDBG_02538 (460 aa).

Residues aspartate 256, aspartate 267, glutamate 390, and glutamate 430 each contribute to the Mn(2+) site.

This sequence belongs to the peptidase M24B family. Mn(2+) serves as cofactor.

The enzyme catalyses Release of any N-terminal amino acid, including proline, that is linked to proline, even from a dipeptide or tripeptide.. Its function is as follows. Catalyzes the removal of a penultimate prolyl residue from the N-termini of peptides. The protein is Probable Xaa-Pro aminopeptidase VDBG_02538 of Verticillium alfalfae (strain VaMs.102 / ATCC MYA-4576 / FGSC 10136) (Verticillium wilt of alfalfa).